A 345-amino-acid polypeptide reads, in one-letter code: Protein phosphatase 1 regulatory subunit 7 (345 aa).

Residues Met1–Asp53 form a disordered region. Over residues Glu13–Arg30 the composition is skewed to basic and acidic residues. LRR repeat units lie at residues Glu62 to Leu83, Lys84 to Val105, Ser106 to Thr127, Glu128 to Thr149, Lys150 to Thr171, Ser172 to Ser193, Ser194 to His215, Asn216 to Val237, Asn238 to Lys259, Lys260 to Thr281, and Asp282 to Lys303. The LRRCT domain maps to Asn316 to Phe345.

The protein belongs to the SDS22 family.

It is found in the nucleus. Its function is as follows. Regulatory subunit of protein phosphatase 1. The polypeptide is Protein phosphatase 1 regulatory subunit 7 (ppp1r7) (Danio rerio (Zebrafish)).